The sequence spans 1042 residues: MRPKTFPATTYSGNSRQRLQEIREGLKQPSKASTQGLLVGPNSDTSLDAKVLGSKDASRQQQMRATPKFGPYQKALREIRYSLLPFANESGTSAAAEVNRQMLQELVNAGCDQEMAGRALKQTGSRSIEAALEYISKMGYLDPRNEQIVRVIKQTSPGKGLAPTPVTRRPSFEGTGEALPSYHQLGGANYEGPAALEEMPRQYLDFLFPGAGAGTHGAQAHQHPPKGYSTAVEPSAHFPGTHYGRGHLLSEQPGYGVQRSSSFQNKTPPDAYSSMAKAQGGPPASLTFPAHAGLYTASHHKPAATPPGAHPLHVLGTRGPTFTGESSAQAVLAPSRNSLNADLYELGSTVPWSAAPLARRDSLQKQGLEASRPHVAFRAGPSRTNSFNNPQPEPSLPAPNTVTAVTAAHILHPVKSVRVLRPEPQTAVGPSHPAWVAAPTAPATESLETKEGSAGPHPLDVDYGGSERRCPPPPYPKHLLLPSKSEQYSVDLDSLCTSVQQSLRGGTEQDRSDKSHKGAKGDKAGRDKKQIQTSPVPVRKNSRDEEKRESRIKSYSPYAFKFFMEQHVENVIKTYQQKVSRRLQLEQEMAKAGLCEAEQEQMRKILYQKESNYNRLKRAKMDKSMFVKIKTLGIGAFGEVCLACKLDTHALYAMKTLRKKDVLNRNQVAHVKAERDILAEADNEWVVKLYYSFQDKDSLYFVMDYIPGGDMMSLLIRMEVFPEHLARFYIAELTLAIESVHKMGFIHRDIKPDNILIDLDGHIKLTDFGLCTGFRWTHNSKYYQKGNHMRQDSMEPGDLWDDVSNCRCGDRLKTLEQRAQKQHQRCLAHSLVGTPNYIAPEVLLRKGYTQLCDWWSVGVILFEMLVGQPPFLAPTPTETQLKVINWESTLHIPTQVRLSAEARDLITKLCCAADCRLGRDGADDLKAHPFFNTIDFSRDIRKQPAPYVPTISHPMDTSNFDPVDEESPWHEASGESAKAWDTLASPSSKHPEHAFYEFTFRRFFDDNGYPFRCPKPSEPAESADPGDADLEGAAEGCQPVYV.

A disordered region spans residues 23 to 44 (REGLKQPSKASTQGLLVGPNSD). Residues 30–44 (SKASTQGLLVGPNSD) are compositionally biased toward polar residues. Ser82 is modified (phosphoserine; by AURKA). One can recognise a UBA domain in the interval 97–138 (EVNRQMLQELVNAGCDQEMAGRALKQTGSRSIEAALEYISKM). The interaction with ubiquitinated AMOTL2 stretch occupies residues 100 to 140 (RQMLQELVNAGCDQEMAGRALKQTGSRSIEAALEYISKMGY). Residues 237–282 (HFPGTHYGRGHLLSEQPGYGVQRSSSFQNKTPPDAYSSMAKAQGGP) form a disordered region. A compositionally biased stretch (polar residues) spans 258 to 267 (QRSSSFQNKT). At Thr267 the chain carries Phosphothreonine. Ser362 bears the Phosphoserine mark. Disordered stretches follow at residues 378–399 (RAGPSRTNSFNNPQPEPSLPAP), 442–481 (PATESLETKEGSAGPHPLDVDYGGSERRCPPPPYPKHLLL), and 501–550 (QSLR…KRES). The short motif at 472–475 (PPPY) is the PPxY motif element. Over residues 507–530 (TEQDRSDKSHKGAKGDKAGRDKKQ) the composition is skewed to basic and acidic residues. Ser534 is subject to Phosphoserine. The span at 541 to 550 (NSRDEEKRES) shows a compositional bias: basic and acidic residues. Residues 626–931 (FVKIKTLGIG…ADDLKAHPFF (306 aa)) enclose the Protein kinase domain. ATP-binding positions include 632–640 (LGIGAFGEV) and Lys655. Asp749 serves as the catalytic Proton acceptor. The AGC-kinase C-terminal domain maps to 932–1010 (NTIDFSRDIR…RRFFDDNGYP (79 aa)). Residue Thr999 is modified to Phosphothreonine. A disordered region spans residues 1014–1042 (PKPSEPAESADPGDADLEGAAEGCQPVYV).

The protein belongs to the protein kinase superfamily. AGC Ser/Thr protein kinase family. In terms of assembly, interacts with and is phosphorylated by AURKA. Binds to AR. Interacts with AJUBA during mitosis and this complex regulates organization of the spindle apparatus through recruitment of gamma-tubulin to the centrosome. Interacts (via PPxY motif) with YAP1 (via WW domains). Interacts with MOB1A and MOB1B. Interacts with LIMD1, WTIP and AJUBA. Interacts with SNAI1. Interacts with WWC1, WWC2 and WWC3 (via their WW domains). Interacts (via UBA domain) with ubiquitinated AMOTL2; the interaction promotes LATS2 phosphorylation of YAP1. It depends on Mg(2+) as a cofactor. In terms of processing, autophosphorylated and phosphorylated during M-phase and the G1/S-phase of the cell cycle. Phosphorylated and activated by STK3/MST2. Phosphorylated by MAP4Ks; in parallel to STK3/MST2 and resulting to its activation. Phosphorylation by NUAK2 may regulate its activity in phosphorylation and inactivation YAP1. Expressed at high levels in ovary and testis and at lower levels in all other tissues examined.

It is found in the cytoplasm. Its subcellular location is the cytoskeleton. The protein localises to the microtubule organizing center. It localises to the centrosome. The protein resides in the spindle pole. It is found in the nucleus. The catalysed reaction is L-seryl-[protein] + ATP = O-phospho-L-seryl-[protein] + ADP + H(+). The enzyme catalyses L-threonyl-[protein] + ATP = O-phospho-L-threonyl-[protein] + ADP + H(+). Functionally, negative regulator of YAP1 in the Hippo signaling pathway that plays a pivotal role in organ size control and tumor suppression by restricting proliferation and promoting apoptosis. The core of this pathway is composed of a kinase cascade wherein STK3/MST2 and STK4/MST1, in complex with its regulatory protein SAV1, phosphorylates and activates LATS1/2 in complex with its regulatory protein MOB1, which in turn phosphorylates and inactivates YAP1 oncoprotein and WWTR1/TAZ. Phosphorylation of YAP1 by LATS2 inhibits its translocation into the nucleus to regulate cellular genes important for cell proliferation, cell death, and cell migration. Also phosphorylates YAP1 in response to cell contact inhibition-driven WWP1 ubiquitination of AMOTL2, which results in LATS2 activation. Acts as a tumor suppressor which plays a critical role in centrosome duplication, maintenance of mitotic fidelity and genomic stability. Negatively regulates G1/S transition by down-regulating cyclin E/CDK2 kinase activity. Negative regulator of the androgen receptor. Phosphorylates SNAI1 in the nucleus leading to its nuclear retention and stabilization, which enhances its epithelial-mesenchymal transition and tumor cell invasion/migration activities. This tumor-promoting activity is independent of its effects upon YAP1 or WWTR1/TAZ. Acts as an activator of the NLRP3 inflammasome by mediating phosphorylation of 'Ser-265' of NLRP3 following NLRP3 palmitoylation, promoting NLRP3 activation by NEK7. The polypeptide is Serine/threonine-protein kinase LATS2 (Mus musculus (Mouse)).